Here is a 257-residue protein sequence, read N- to C-terminus: Thioredoxin-dependent peroxide reductase, mitochondrial (257 aa).

A mitochondrion-targeting transit peptide spans 1-62 (MAAAAGRLLW…FAFSTSSSFH (62 aa)). The 159-residue stretch at 64-222 (PAVTQHAPHF…PLRLVKAFQF (159 aa)) folds into the Thioredoxin domain. K84 is subject to N6-succinyllysine. The residue at position 92 (K92) is an N6-acetyllysine; alternate. K92 bears the N6-succinyllysine; alternate mark. C109 acts as the Cysteine sulfenic acid (-SOH) intermediate in catalysis. T147 is modified (phosphothreonine).

It belongs to the peroxiredoxin family. AhpC/Prx1 subfamily. As to quaternary structure, homodimer; disulfide-linked, upon oxidation. 6 homodimers assemble to form a ring-like dodecamer. Interacts with NEK6. Interacts with LRRK2. Interacts with MAP3K13. Interacts with RPS6KC1 (via PX domain). Phosphorylated by LRRK2; phosphorylation reduces perodixase activity. In terms of processing, the enzyme can be inactivated by further oxidation of the cysteine sulfenic acid (C(P)-SOH) to sulphinic acid (C(P)-SO2H) and sulphonic acid (C(P)-SO3H) instead of its condensation to a disulfide bond. Post-translationally, S-palmitoylated. In terms of tissue distribution, ubiquitous.

Its subcellular location is the mitochondrion. It localises to the cytoplasm. It is found in the early endosome. The catalysed reaction is a hydroperoxide + [thioredoxin]-dithiol = an alcohol + [thioredoxin]-disulfide + H2O. Its function is as follows. Thiol-specific peroxidase that catalyzes the reduction of hydrogen peroxide and organic hydroperoxides to water and alcohols, respectively. Plays a role in cell protection against oxidative stress by detoxifying peroxides. Acts synergistically with MAP3K13 to regulate the activation of NF-kappa-B in the cytosol. Required for the maintenance of physical strength. This Rattus norvegicus (Rat) protein is Thioredoxin-dependent peroxide reductase, mitochondrial (Prdx3).